Reading from the N-terminus, the 253-residue chain is Sulfate transporter CysZ (253 aa).

4 consecutive transmembrane segments (helical) span residues 31-51 (FVIL…WWLF), 75-95 (LLWP…FSTI), 151-171 (IVLL…PVLW), and 222-242 (IPLL…AMWV).

Belongs to the CysZ family.

It localises to the cell inner membrane. Its function is as follows. High affinity, high specificity proton-dependent sulfate transporter, which mediates sulfate uptake. Provides the sulfur source for the cysteine synthesis pathway. This chain is Sulfate transporter CysZ, found in Shigella flexneri.